A 300-amino-acid polypeptide reads, in one-letter code: Haloalkane dehalogenase (300 aa).

The AB hydrolase-1 domain occupies 32-155; sequence AIVFQHGNPT…PAVRGVFQGF (124 aa). Asp-109 acts as the Nucleophile in catalysis. Residue Glu-133 is the Proton donor of the active site. His-273 acts as the Proton acceptor in catalysis.

The protein belongs to the haloalkane dehalogenase family. Type 2 subfamily. Monomer.

The enzyme catalyses 1-haloalkane + H2O = a halide anion + a primary alcohol + H(+). In terms of biological role, catalyzes hydrolytic cleavage of carbon-halogen bonds in halogenated aliphatic compounds, leading to the formation of the corresponding primary alcohols, halide ions and protons. This is Haloalkane dehalogenase from Mycobacterium tuberculosis (strain ATCC 25177 / H37Ra).